The chain runs to 662 residues: DNA ligase (662 aa).

Residues 32–36, 75–76, and glutamate 106 each bind NAD(+); these read DAEYD and SL. Lysine 108 functions as the N6-AMP-lysine intermediate in the catalytic mechanism. Residues arginine 129, glutamate 164, lysine 271, and lysine 295 each coordinate NAD(+). Zn(2+) contacts are provided by cysteine 389, cysteine 392, cysteine 407, and cysteine 413. The 83-residue stretch at 580 to 662 folds into the BRCT domain; that stretch reads SSNSVLNNKI…HKVISLGVFK (83 aa).

It belongs to the NAD-dependent DNA ligase family. LigA subfamily. Requires Mg(2+) as cofactor. Mn(2+) serves as cofactor.

The enzyme catalyses NAD(+) + (deoxyribonucleotide)n-3'-hydroxyl + 5'-phospho-(deoxyribonucleotide)m = (deoxyribonucleotide)n+m + AMP + beta-nicotinamide D-nucleotide.. In terms of biological role, DNA ligase that catalyzes the formation of phosphodiester linkages between 5'-phosphoryl and 3'-hydroxyl groups in double-stranded DNA using NAD as a coenzyme and as the energy source for the reaction. It is essential for DNA replication and repair of damaged DNA. This Wolbachia pipientis wMel protein is DNA ligase.